A 45-amino-acid polypeptide reads, in one-letter code: Amphipathic peptide Hj0164 (45 aa).

An N-terminal signal peptide occupies residues 1-23 (MKSQAFFLLFLVVLLLATTQSEA). F33 carries the phenylalanine amide modification. Positions 37–45 (SLRDVDTMK) are excised as a propeptide.

The protein belongs to the non-disulfide-bridged peptide (NDBP) superfamily. Short antimicrobial peptide (group 4) family. In terms of tissue distribution, expressed by the venom gland.

It is found in the secreted. The protein localises to the target cell membrane. Amphipathic peptide that shows antibacterial activities. This is Amphipathic peptide Hj0164 from Hottentotta judaicus (Black scorpion).